The primary structure comprises 130 residues: Iron-sulfur cluster insertion protein ErpA (130 aa).

C58, C122, and C124 together coordinate iron-sulfur cluster.

This sequence belongs to the HesB/IscA family. Homodimer. Requires iron-sulfur cluster as cofactor.

Its function is as follows. Required for insertion of 4Fe-4S clusters for at least IspG. This chain is Iron-sulfur cluster insertion protein ErpA, found in Stenotrophomonas maltophilia (strain K279a).